Reading from the N-terminus, the 364-residue chain is F-box protein At1g59680 (364 aa).

One can recognise an F-box domain in the interval 2–49 (TTMSDLSVDLVGEILSRVPLTSLSAVRCTCKSWNTLSKHQIFGKAELA).

The sequence is that of F-box protein At1g59680 from Arabidopsis thaliana (Mouse-ear cress).